Here is a 200-residue protein sequence, read N- to C-terminus: Ras-related protein Rab-10 (200 aa).

GTP is bound by residues Ser18, Gly19, Val20, Gly21, Lys22, Thr23, Cys24, Asn35, Thr36, Ser40, and Thr41. Residue Thr23 participates in Mg(2+) binding. 2 short sequence motifs (switch) span residues 32-46 (DAFN…GIDF) and 64-81 (DTAG…YYRG). Mg(2+) is bound by residues Thr41 and Asp64. Position 67 (Gly67) interacts with GTP. Residue Thr73 is modified to Phosphothreonine; by LRRK2. Lys102 is modified (N6-acetyllysine). A Glycyl lysine isopeptide (Lys-Gly) (interchain with G-Cter in ubiquitin) cross-link involves residue Lys102. Residues Asn122, Lys123, Asp125, and Met126 each contribute to the GTP site. Residue Lys136 forms a Glycyl lysine isopeptide (Lys-Gly) (interchain with G-Cter in ubiquitin) linkage. Residues Ser152, Ala153, and Lys154 each coordinate GTP. Lys154 is covalently cross-linked (Glycyl lysine isopeptide (Lys-Gly) (interchain with G-Cter in ubiquitin)). Residues Cys199 and Cys200 are each lipidated (S-geranylgeranyl cysteine).

This sequence belongs to the small GTPase superfamily. Rab family. Interacts with MYO5A; mediates the transport to the plasma membrane of SLC2A4/GLUT4 storage vesicles. Interacts with GDI1 and with GDI2; negatively regulates RAB10 association with membranes and activation. Interacts (GDP-bound form) with LLGL1; the interaction is direct and promotes RAB10 association with membranes and activation through competition with the Rab inhibitor GDI1. Interacts with EXOC4; probably associates with the exocyst. Interacts (GTP-bound form) with MICALCL, MICAL1, MICAL3, EHBP1 and EHBP1L1; at least in case of MICAL1 two molecules of RAB10 can bind to one molecule of MICAL1. Interacts with TBC1D13. Interacts with SEC16A. Interacts with CHM and CHML. Interacts with LRRK2; interaction facilitates phosphorylation of Thr-73. Interacts (when phosphorylated on Thr-73) with RILPL1 and RILPL2. Interacts with TBC1D21. Interacts with MARCKS. It depends on Mg(2+) as a cofactor. In terms of processing, ubiquitinated upon Legionella pneumophila infection. Ubiquitination does not lead to proteasomal degradation. Post-translationally, phosphorylation of Thr-73 in the switch II region by LRRK2 prevents the association of dRAB regulatory proteins, including CHM, CHML and RAB GDP dissociation inhibitors GDI1 and GDI2. Phosphorylation of Thr-73 by LRRK2 is stimulated by RAB29 and RAB32. Phosphorylation by LRRK2 is required for localization to stressed lysosomes. Expressed in the hippocampus. Expressed in neutrophils (at protein level). Expressed in the testis (at protein level).

The protein resides in the cytoplasmic vesicle membrane. The protein localises to the golgi apparatus membrane. It localises to the golgi apparatus. Its subcellular location is the trans-Golgi network membrane. It is found in the endosome membrane. The protein resides in the recycling endosome membrane. The protein localises to the cytoplasmic vesicle. It localises to the phagosome membrane. Its subcellular location is the cytoplasm. It is found in the cytoskeleton. The protein resides in the cilium basal body. The protein localises to the endoplasmic reticulum membrane. It localises to the perinuclear region. Its subcellular location is the lysosome. It catalyses the reaction GTP + H2O = GDP + phosphate + H(+). With respect to regulation, regulated by guanine nucleotide exchange factors (GEFs) DENND4C and RABIF which promote the exchange of bound GDP for free GTP. Regulated by GTPase activating proteins (GAPs) including TBC1D21 which increase the GTP hydrolysis activity. Inhibited by GDP dissociation inhibitors GDI1 and GDI2 which prevent Rab-GDP dissociation. Functionally, the small GTPases Rab are key regulators of intracellular membrane trafficking, from the formation of transport vesicles to their fusion with membranes. Rabs cycle between an inactive GDP-bound form and an active GTP-bound form that is able to recruit to membranes different set of downstream effectors directly responsible for vesicle formation, movement, tethering and fusion. That Rab is mainly involved in the biosynthetic transport of proteins from the Golgi to the plasma membrane. Regulates, for instance, SLC2A4/GLUT4 glucose transporter-enriched vesicles delivery to the plasma membrane. In parallel, it regulates the transport of TLR4, a toll-like receptor to the plasma membrane and therefore may be important for innate immune response. Also plays a specific role in asymmetric protein transport to the plasma membrane. In neurons, it is involved in axonogenesis through regulation of vesicular membrane trafficking toward the axonal plasma membrane. In epithelial cells, it regulates transport from the Golgi to the basolateral membrane. May play a role in the basolateral recycling pathway and in phagosome maturation. May play a role in endoplasmic reticulum dynamics and morphology controlling tubulation along microtubules and tubules fusion. Together with LRRK2, RAB8A, and RILPL1, it regulates ciliogenesis. When phosphorylated by LRRK2 on Thr-73, binds RILPL1 and inhibits ciliogenesis. Participates in the export of a subset of neosynthesized proteins through a Rab8-Rab10-Rab11-dependent endososomal export route. Targeted to and stabilized on stressed lysosomes through LRRK2 phosphorylation where it promotes the extracellular release of lysosomal content through EHBP1 and EHNP1L1 effector proteins. In terms of biological role, (Microbial infection) Upon Legionella pneumophila infection promotes endoplasmic reticulum recruitment and bacterial replication. Plays a role in remodeling the Legionella-containing vacuole (LCV) into an endoplasmic reticulum-like vacuole. This chain is Ras-related protein Rab-10, found in Homo sapiens (Human).